Here is a 273-residue protein sequence, read N- to C-terminus: MSPKRDGLGTDDGLHSQVLQEQVSTGDNLHECDSQGRSKDTLVREEKTYKCKECGSVFNKNSLLVRHQQIHTGVKPYEYQECGKAFPEKVDFVRHMRIHTGEKPCKCVECRKVFNRRSHLLCYRQIHTGENPYECSECGKTFSYHSVFIQHRVTHTGEKLFGCKECGKTFYYNSSLTRHMKIHTGEKPCKCSECGKTFTYHSVFFRHSMTHTSGKPYECKECGKGFYYSYSLTRHTRSHTGEKPYECLEHRKAFGYHSAFAQQSKIHSGGKNL.

The C2H2-type 1 zinc finger occupies 49-71 (YKCKECGSVFNKNSLLVRHQQIH). The segment at 77–99 (YEYQECGKAFPEKVDFVRHMRIH) adopts a C2H2-type 2; degenerate zinc-finger fold. The C2H2-type 3; atypical zinc-finger motif lies at 105–127 (CKCVECRKVFNRRSHLLCYRQIH). 4 consecutive C2H2-type zinc fingers follow at residues 133–155 (YECS…RVTH), 161–183 (FGCK…MKIH), 187–211 (KPCK…SMTH), and 217–239 (YECK…TRSH).

The protein belongs to the krueppel C2H2-type zinc-finger protein family.

The protein resides in the nucleus. Its function is as follows. May be involved in transcriptional regulation. This chain is Zinc finger protein 80 (ZNF80), found in Pan troglodytes (Chimpanzee).